The chain runs to 429 residues: Enolase (429 aa).

Gln-174 serves as a coordination point for (2R)-2-phosphoglycerate. Residue Glu-218 is the Proton donor of the active site. 3 residues coordinate Mg(2+): Asp-254, Glu-295, and Asp-321. Positions 346, 375, 376, and 397 each coordinate (2R)-2-phosphoglycerate. The active-site Proton acceptor is Lys-346.

This sequence belongs to the enolase family. Mg(2+) is required as a cofactor.

It localises to the cytoplasm. The protein resides in the secreted. It is found in the cell surface. It catalyses the reaction (2R)-2-phosphoglycerate = phosphoenolpyruvate + H2O. Its pathway is carbohydrate degradation; glycolysis; pyruvate from D-glyceraldehyde 3-phosphate: step 4/5. In terms of biological role, catalyzes the reversible conversion of 2-phosphoglycerate (2-PG) into phosphoenolpyruvate (PEP). It is essential for the degradation of carbohydrates via glycolysis. This is Enolase from Methanosarcina acetivorans (strain ATCC 35395 / DSM 2834 / JCM 12185 / C2A).